The chain runs to 473 residues: Keratin, type I cytoskeletal 16 (473 aa).

The tract at residues 1-116 is head; that stretch reads MTTCSRQFTS…AGGDGLLVGS (116 aa). The coil 1A stretch occupies residues 117–152; the sequence is EKVTMQNLNDRLASYLDKVRALEEANADLEVKIRDW. The 312-residue stretch at 117 to 428 folds into the IF rod domain; that stretch reads EKVTMQNLND…RLLEGEDAHL (312 aa). The interval 153–170 is linker 1; it reads YQRQRPSEIKDYSPYFKT. The interval 171–262 is coil 1B; sequence IEDLRNKIIA…KNHEEEMLAL (92 aa). The segment at 263 to 285 is linker 12; it reads RGQTGGDVNVEMDAAPGVDLSRI. Residues 286 to 424 form a coil 2 region; the sequence is LNEMRDQYEQ…ATYRRLLEGE (139 aa). Positions 425–473 are tail; it reads DAHLSSQQASGQSYSSREVFTSSSSSSSRQTRPILKEQSSSSFSQGQSS. A disordered region spans residues 428–473; the sequence is LSSQQASGQSYSSREVFTSSSSSSSRQTRPILKEQSSSSFSQGQSS. Composition is skewed to low complexity over residues 429–452 and 462–473; these read SSQQ…SSSS and QSSSSFSQGQSS.

It belongs to the intermediate filament family. Heterodimer of a type I and a type II keratin. KRT16 associates with KRT6 isomers (KRT6A or KRT6B). Interacts with TCHP. Interacts with TRADD. In terms of tissue distribution, expressed in the corneal epithelium (at protein level).

Functionally, epidermis-specific type I keratin that plays a key role in skin. Acts as a regulator of innate immunity in response to skin barrier breach: required for some inflammatory checkpoint for the skin barrier maintenance. This is Keratin, type I cytoskeletal 16 (KRT16) from Homo sapiens (Human).